The primary structure comprises 141 residues: Large ribosomal subunit protein uL16m (141 aa).

It belongs to the universal ribosomal protein uL16 family.

Its subcellular location is the mitochondrion. This is Large ribosomal subunit protein uL16m (RPL16) from Acanthamoeba castellanii (Amoeba).